The chain runs to 231 residues: tRNA (guanine-N(1)-)-methyltransferase (231 aa).

Residues Gly-114 and 134-139 contribute to the S-adenosyl-L-methionine site; that span reads IGDYVL.

This sequence belongs to the RNA methyltransferase TrmD family. Homodimer.

It is found in the cytoplasm. It catalyses the reaction guanosine(37) in tRNA + S-adenosyl-L-methionine = N(1)-methylguanosine(37) in tRNA + S-adenosyl-L-homocysteine + H(+). Functionally, specifically methylates guanosine-37 in various tRNAs. This chain is tRNA (guanine-N(1)-)-methyltransferase, found in Clostridioides difficile (strain 630) (Peptoclostridium difficile).